Consider the following 577-residue polypeptide: Torulene dioxygenase (577 aa).

The Fe(2+) site is built by His239, His291, His361, and His570.

Belongs to the carotenoid oxygenase family. It depends on Fe(2+) as a cofactor.

It is found in the cytoplasm. Its subcellular location is the cytosol. It carries out the reaction torulene + O2 = 4'-apo-beta-carotenal + 3-methyl-2-butenal. The protein operates within carotenoid biosynthesis. Torulene dioxygenase; part of the pathway that mediates the biosynthesis of neurosporaxanthin, a carboxylic apocarotenoid acting as an essential protective pigments and leading to orange pigmentation. CarT mediates the cleavage of torulene into beta-apo-4'-carotenal, the aldehyde corresponding to the acidic neurosporaxanthin. Is also active on other monocyclic synthetic substrates such as beta-apo-8'-carotenal and beta-apo-10'-carotenal to produce beta-apo-14'-carotenal and retinal(beta-apo-15'-carotenal), respectively. Neurosporaxanthin is synthesized from geranyl-geranyl pyrophosphate (GGPP) through several enzymatic activities. Phytoene synthase activity performed by the bifunctional enzyme carAR first produces phytoene from geranyl-geranyl pyrophosphate (GGPP). The phytoene dehydrogenase carB then introduces 4 desaturations to lead to lycopene which is substrate of the carotene cyclase activity of carAR that leads to the production of gamma-carotene. CarB then performs a 5th desaturation reaction to yield torulene. Torulene is the substrate of the dioxidase carT that breaks the molecule, removing five carbon atoms to yield beta-apo-4'-carotenal, whereas the aldehyde dehydrogenase carD mediates the last step by converting beta-apo-4'-carotenal into neurosporaxanthin. The polypeptide is Torulene dioxygenase (Fusarium fujikuroi (Bakanae and foot rot disease fungus)).